A 128-amino-acid polypeptide reads, in one-letter code: Large ribosomal subunit protein bL12 (128 aa).

The protein belongs to the bacterial ribosomal protein bL12 family. As to quaternary structure, homodimer. Part of the ribosomal stalk of the 50S ribosomal subunit. Forms a multimeric L10(L12)X complex, where L10 forms an elongated spine to which 2 to 4 L12 dimers bind in a sequential fashion. Binds GTP-bound translation factors.

In terms of biological role, forms part of the ribosomal stalk which helps the ribosome interact with GTP-bound translation factors. Is thus essential for accurate translation. In Synechocystis sp. (strain ATCC 27184 / PCC 6803 / Kazusa), this protein is Large ribosomal subunit protein bL12.